Here is a 365-residue protein sequence, read N- to C-terminus: MIYNFGAGPSVLPKEVLKKVQEELLDFEKSGMSVMEISHRSKSFQEVIDEAQSNLRDLMSIPQNYKILFLQGGASTQFSMIPMNLALGKKAYYAISGAFGKKAYDEAVKLSQTLDFEAISLGSTQSEHYNHLLKIDKSKVDEKMAAYLHITTNNTIEGTTIFPENLPEVNSVPLIADMSSNILAVDYDVSKFGLIYAGAQKNLGIAGLTIVIIREDLLNQKESLSSMMDYRILAQNGSMYNTPPTFAIYLAGLVFKWVKEQGGVKKLEAINRQKARMLYDLIDQSDFYQSPVLNEAERSICNVVFTSPSKELDALFVQKAEEKGFKSIKGHRSVGGMRASIYNAFPIEGVLELVKFMKEFEEENK.

Arginine 40 provides a ligand contact to L-glutamate. Residues alanine 74–serine 75, phenylalanine 99, threonine 155, aspartate 177, and glutamine 200 each bind pyridoxal 5'-phosphate. Lysine 201 carries the post-translational modification N6-(pyridoxal phosphate)lysine. Asparagine 241–threonine 242 serves as a coordination point for pyridoxal 5'-phosphate.

This sequence belongs to the class-V pyridoxal-phosphate-dependent aminotransferase family. SerC subfamily. As to quaternary structure, homodimer. It depends on pyridoxal 5'-phosphate as a cofactor.

It is found in the cytoplasm. The catalysed reaction is O-phospho-L-serine + 2-oxoglutarate = 3-phosphooxypyruvate + L-glutamate. The enzyme catalyses 4-(phosphooxy)-L-threonine + 2-oxoglutarate = (R)-3-hydroxy-2-oxo-4-phosphooxybutanoate + L-glutamate. It functions in the pathway amino-acid biosynthesis; L-serine biosynthesis; L-serine from 3-phospho-D-glycerate: step 2/3. Its function is as follows. Catalyzes the reversible conversion of 3-phosphohydroxypyruvate to phosphoserine and of 3-hydroxy-2-oxo-4-phosphonooxybutanoate to phosphohydroxythreonine. The protein is Phosphoserine aminotransferase of Lactococcus lactis subsp. cremoris (strain SK11).